The sequence spans 928 residues: Isoleucine--tRNA ligase (928 aa).

The 'HIGH' region signature appears at 57–67 (PFANGNIHMGH). Residue E554 participates in L-isoleucyl-5'-AMP binding. Residues 595-599 (KMSKS) carry the 'KMSKS' region motif. K598 is an ATP binding site. Positions 887, 890, 907, and 910 each coordinate Zn(2+).

This sequence belongs to the class-I aminoacyl-tRNA synthetase family. IleS type 1 subfamily. In terms of assembly, monomer. Zn(2+) serves as cofactor.

The protein localises to the cytoplasm. It carries out the reaction tRNA(Ile) + L-isoleucine + ATP = L-isoleucyl-tRNA(Ile) + AMP + diphosphate. Functionally, catalyzes the attachment of isoleucine to tRNA(Ile). As IleRS can inadvertently accommodate and process structurally similar amino acids such as valine, to avoid such errors it has two additional distinct tRNA(Ile)-dependent editing activities. One activity is designated as 'pretransfer' editing and involves the hydrolysis of activated Val-AMP. The other activity is designated 'posttransfer' editing and involves deacylation of mischarged Val-tRNA(Ile). This chain is Isoleucine--tRNA ligase, found in Lactobacillus johnsonii (strain CNCM I-12250 / La1 / NCC 533).